We begin with the raw amino-acid sequence, 460 residues long: MKEIKNILIVSFGFLLLFTAFGGLQSLQSSLNSDEGLGVASLSVIYAALIVSSVFVPPIVIKKIGCKWTIVASMCCYITYSLGNFYASWYTLIPTSLILGFGGAPLWAAKCTYLTESGNRYAEKKGKLAKDIVNQYFGLFFLIFQSSGVWGNLISSLIFGQNYPAGSNDSFTDYSQCGANDCPGTNFGNGTGTTKPTKSLIYTLLGVYTGSGVLAVILIAVFLDTINLRTDQLKPGTKEESFSKKILATVRHLKDKRQCLLIPLTMYSGFEQGFLSGDYTKSYVTCSLGIHFVGYVMICFAATNAVCSLLFGQLSKYTGRICLFILAAVSNAACVIALLLWEPYPNDFAVFFIFPAIWGMADAIWQTQTNALYGVLFDEHKEAAFANYRLWESLGFVIAYGYSTFLCVSVKLYILLAVLLIAIVFYGFVEYLEHVEHKKAASTTISQNEDSNSLCKQTAM.

5 helical membrane-spanning segments follow: residues 7–27 (ILIVSFGFLLLFTAFGGLQSL), 41–61 (SLSVIYAALIVSSVFVPPIVI), 68–88 (WTIVASMCCYITYSLGNFYAS), 89–109 (WYTLIPTSLILGFGGAPLWAA), and 139–159 (LFFLIFQSSGVWGNLISSLIF). Asn-168 and Asn-189 each carry an N-linked (GlcNAc...) asparagine glycan. The next 6 membrane-spanning stretches (helical) occupy residues 203–223 (TLLGVYTGSGVLAVILIAVFL), 292–312 (FVGYVMICFAATNAVCSLLFG), 321–341 (ICLFILAAVSNAACVIALLLW), 345–365 (PNDFAVFFIFPAIWGMADAIW), 390–410 (LWESLGFVIAYGYSTFLCVSV), and 412–432 (LYILLAVLLIAIVFYGFVEYL).

This sequence belongs to the unc-93 family.

Its subcellular location is the membrane. The polypeptide is Protein unc-93 homolog A (unc93a) (Xenopus laevis (African clawed frog)).